Reading from the N-terminus, the 1391-residue chain is DNA-directed RNA polymerase subunit beta' (1391 aa).

Positions 72, 74, 87, and 90 each coordinate Zn(2+). Residues D462, D464, and D466 each contribute to the Mg(2+) site. C816, C890, C897, and C900 together coordinate Zn(2+).

It belongs to the RNA polymerase beta' chain family. In terms of assembly, the RNAP catalytic core consists of 2 alpha, 1 beta, 1 beta' and 1 omega subunit. When a sigma factor is associated with the core the holoenzyme is formed, which can initiate transcription. Mg(2+) serves as cofactor. Zn(2+) is required as a cofactor.

The catalysed reaction is RNA(n) + a ribonucleoside 5'-triphosphate = RNA(n+1) + diphosphate. Its function is as follows. DNA-dependent RNA polymerase catalyzes the transcription of DNA into RNA using the four ribonucleoside triphosphates as substrates. The sequence is that of DNA-directed RNA polymerase subunit beta' from Neisseria gonorrhoeae (strain NCCP11945).